Here is a 204-residue protein sequence, read N- to C-terminus: uncharacterized protein (204 aa).

The segment at 118–169 (FPAASERPMPSRRLSKATQNVQTRPSERPAPCHRRPGPRGPGGRDPPEACHP) is disordered.

This is an uncharacterized protein from Encephalitozoon cuniculi (strain GB-M1) (Microsporidian parasite).